The primary structure comprises 215 residues: Ribosome maturation factor RimP (215 aa).

Residues Lys-180–Ser-215 form a disordered region. A compositionally biased stretch (acidic residues) spans Pro-195 to Ala-207.

It belongs to the RimP family.

It localises to the cytoplasm. Required for maturation of 30S ribosomal subunits. The protein is Ribosome maturation factor RimP of Mesorhizobium japonicum (strain LMG 29417 / CECT 9101 / MAFF 303099) (Mesorhizobium loti (strain MAFF 303099)).